We begin with the raw amino-acid sequence, 214 residues long: Redox-sensing transcriptional repressor Rex (214 aa).

A DNA-binding region (H-T-H motif) is located at residues 17–56; sequence LYYRIFKRFHADQVEKASSKQIADAMGIDSATVRRDFSYF. 91 to 96 serves as a coordination point for NAD(+); sequence GCGNIG.

It belongs to the transcriptional regulatory Rex family. Homodimer.

The protein resides in the cytoplasm. In terms of biological role, modulates transcription in response to changes in cellular NADH/NAD(+) redox state. The polypeptide is Redox-sensing transcriptional repressor Rex (Streptococcus pyogenes serotype M4 (strain MGAS10750)).